The chain runs to 326 residues: tRNA-modifying protein YgfZ (326 aa).

Folate-binding residues include W27 and W189.

The protein belongs to the tRNA-modifying YgfZ family.

It localises to the cytoplasm. In terms of biological role, folate-binding protein involved in regulating the level of ATP-DnaA and in the modification of some tRNAs. It is probably a key factor in regulatory networks that act via tRNA modification, such as initiation of chromosomal replication. This Escherichia fergusonii (strain ATCC 35469 / DSM 13698 / CCUG 18766 / IAM 14443 / JCM 21226 / LMG 7866 / NBRC 102419 / NCTC 12128 / CDC 0568-73) protein is tRNA-modifying protein YgfZ.